Here is a 410-residue protein sequence, read N- to C-terminus: Sprouty-related, EVH1 domain-containing protein 2 (410 aa).

The 118-residue stretch at 5-122 (THPDDDSYIV…RGVRKAIEDL (118 aa)) folds into the WH1 domain. The tract at residues 127 to 171 (TTSSSTLHNEAELGDDDVFTTATDSSSNSSQKREPTTRTISSPTS) is disordered. Residues 146–156 (TTATDSSSNSS) are compositionally biased toward polar residues. The KBD domain occupies 197 to 252 (SYPQVTFPEDDEEIVRINPREKIWMTGYEDYRHAPVRGKYLDTTEDADSYVRFAKG). 2 positions are modified to phosphotyrosine: Y224 and Y227. The tract at residues 274–294 (DPKGSVIKTQPPRAKSRRRKE) is disordered. The region spanning 300–408 (RCVYCRDMFN…CRCCGGKHKA (109 aa)) is the SPR domain.

As to quaternary structure, homodimer and heterodimer. Able to interact with SPRED1 to form heterodimers. Interacts with RAS. May interact with ZDHHC13 (via ANK repeats) and ZDHHC17 (via ANK repeats). Interacts with TESK1. Interacts with NF1. In terms of processing, phosphorylated on serine and threonine residues. Phosphorylated on tyrosine. Phosphorylation of Tyr-224 and Tyr-227 are required for ubiquitination. Ubiquitinated; leading to degradation by the proteasome. Predominantly expressed in lung, liver and testis. In testis, it is specially found in mature spermatids projecting into the lumen of the seminiferous. Strongly expressed in glandular epithelia. Also expressed in embryonic tissues such as heart, lung, liver and brain.

The protein localises to the cell membrane. It is found in the cytoplasmic vesicle. Its subcellular location is the secretory vesicle membrane. It localises to the cytoplasm. In terms of biological role, negatively regulates Ras signaling pathways and downstream activation of MAP kinases. Recruits and translocates NF1 to the cell membrane, thereby enabling NF1-dependent hydrolysis of active GTP-bound Ras to inactive GDP-bound Ras. Inhibits fibroblast growth factor (FGF)-induced retinal lens fiber differentiation, probably by inhibiting FGF-mediated phosphorylation of ERK1/2. Inhibits TGFB-induced epithelial-to-mesenchymal transition in lens epithelial cells. In Mus musculus (Mouse), this protein is Sprouty-related, EVH1 domain-containing protein 2 (Spred2).